We begin with the raw amino-acid sequence, 200 residues long: HTH-type transcriptional repressor KstR2 (200 aa).

One can recognise an HTH tetR-type domain in the interval 9-69; sequence NSRRGELLEL…ELLRGFLDWL (61 aa). The segment at residues 32-51 is a DNA-binding region (H-T-H motif); the sequence is TVRDIADGAGILSGSLYHHF.

In terms of assembly, homodimer.

Controls the expression of a small regulon that may play a role in the utilization of cholesterol. This is HTH-type transcriptional repressor KstR2 (kstR2) from Mycobacterium tuberculosis (strain CDC 1551 / Oshkosh).